The primary structure comprises 123 residues: Large ribosomal subunit protein bL19c (123 aa).

This sequence belongs to the bacterial ribosomal protein bL19 family.

The protein localises to the plastid. It localises to the chloroplast. This is Large ribosomal subunit protein bL19c (rpl19) from Porphyra purpurea (Red seaweed).